The following is a 1867-amino-acid chain: TATA-binding protein-associated factor MOT1 (1867 aa).

Ser93 is modified (phosphoserine). The interval 169 to 228 is disordered; that stretch reads KTDDIKQETSMLNASDKANENKSNANKKSARMLAMARRKKKMSAKNTPKHPVDITESSVS. The segment covering 181–203 has biased composition (low complexity); sequence NASDKANENKSNANKKSARMLAM. Residues 195-211 carry the Nuclear localization signal motif; sequence KKSARMLAMARRKKKMS. 3 HEAT repeats span residues 289–326, 445–482, and 541–578; these read WQFQ…KHAY, GLLE…EFVK, and WSFK…IKDD. A Phosphoserine modification is found at Ser677. HEAT repeat units lie at residues 1108–1145 and 1188–1225; these read SEVF…ISSV and PYVI…LVPL. Residues 1284–1457 enclose the Helicase ATP-binding domain; that stretch reads AFLNKYHLHG…WSLFDFLMPG (174 aa). 1297–1304 contacts ATP; sequence DDMGLGKT. Positions 1408 to 1411 match the DEGH box motif; the sequence is DEGH. One copy of the HEAT 6 repeat lies at 1495 to 1537; sequence ALHKQVLPFMLRRLKEDVLSDLPPKIIQDYYCELGDLQKQLYM. In terms of domain architecture, Helicase C-terminal spans 1639–1787; sequence PIQNVISQHR…STVVNQQNSG (149 aa). The disordered stretch occupies residues 1802–1822; it reads PDNVTSQDNEEKNNGDSQAAK.

The protein belongs to the SNF2/RAD54 helicase family. As to quaternary structure, forms a complex with TBP which binds TATA DNA with high affinity but with altered specificity.

The protein resides in the mitochondrion. It is found in the nucleus. Functionally, regulates transcription in association with TATA binding protein (TBP). Removes TBP from the TATA box via its C-terminal ATPase activity. Both transcription activation and repression require its ATPase activity. The polypeptide is TATA-binding protein-associated factor MOT1 (MOT1) (Saccharomyces cerevisiae (strain ATCC 204508 / S288c) (Baker's yeast)).